The chain runs to 860 residues: M-phase phosphoprotein 8 (860 aa).

N-acetylmethionine is present on Met-1. Residues Ser-51, Ser-85, Ser-136, and Ser-138 each carry the phosphoserine modification. Positions 59 to 118 (FEVEKILDMKTEGGKVLYKVRWKGYTSDDDTWEPEIHLEDCKEVLLEFRKKIAENKAKAV) constitute a Chromo domain. The histone H3K9me3 binding stretch occupies residues 80 to 87 (WKGYTSDD). The segment covering 129-141 (NDIFEANSDSDQQ) has biased composition (polar residues). A disordered region spans residues 129 to 191 (NDIFEANSDS…SKPDLESSLE (63 aa)). Position 144 is a phosphothreonine (Thr-144). Residues Ser-149 and Ser-164 each carry the phosphoserine; by CDK1 modification. Basic and acidic residues-rich tracts occupy residues 159–169 (QREEKSPDDLK) and 177–186 (KLKDKSKPDL). 3 positions are modified to phosphoserine: Ser-188, Ser-189, and Ser-192. Residues 206-249 (AKEELKESKKPKKDEVKETKELKKVKKGEIRDLKTKTREDPKEN) are compositionally biased toward basic and acidic residues. Positions 206-440 (AKEELKESKK…GRKEPKGLKT (235 aa)) are disordered. The span at 259–268 (ESQVESESSV) shows a compositional bias: low complexity. Residues Ser-266, Ser-272, and Ser-279 each carry the phosphoserine modification. Residues 280-314 (EGLHSDSREEKQNTKSARERAGQDMGLEHGFEKPL) show a composition bias toward basic and acidic residues. Ser-319 bears the Phosphoserine mark. Thr-334 is subject to Phosphothreonine; by CDK1. The span at 336 to 377 (RKAEDTRENRKLENKNAFLEKKTVPKKQRNQDRSKSAAELEK) shows a compositional bias: basic and acidic residues. At Thr-385 the chain carries Phosphothreonine; by CDK1. Phosphoserine occurs at positions 392, 400, and 403. Residues 408–440 (KETKRNESKEKYQKRHDSDKEEKGRKEPKGLKT) show a composition bias toward basic and acidic residues. The interaction with humanin stretch occupies residues 431 to 560 (GRKEPKGLKT…HLDGKDENFA (130 aa)). Thr-454 is subject to Phosphothreonine. The disordered stretch occupies residues 458–496 (KNDVSENNRKREEIPLDFKTIDDHKTKENKQSLKERRNT). 4 ANK repeats span residues 600 to 629 (SGMT…KVNG), 633 to 662 (NGTT…FVNV), 666 to 695 (NGET…DCNI), and 699 to 728 (HQNS…TLSR).

As to quaternary structure, homodimer. Interacts (via chromo domain) with histone H3K9me3. Has the highest affinity for H3K9me3, and lesser affinity for H3K9me2 and H3K9me1. Component of the HUSH complex; at least composed of TASOR, PPHLN1 and MPHOSPH8. Interacts with DNMT3, EHMT1 and SETDB1. Interacts with MORC2; the interaction associateS MORC2 with the HUSH complex which recruits MORC2 to heterochromatic loci. Interacts with ZNF638; leading to recruitment of the HUSH complex to unintegrated retroviral DNA. Interacts with TASOR. Interacts with humanin. Phosphorylated in M (mitotic) phase. Phosphorylation by CDK1 promotes dissociation from chromatin.

The protein localises to the nucleus. It localises to the chromosome. Its function is as follows. Heterochromatin component that specifically recognizes and binds methylated 'Lys-9' of histone H3 (H3K9me) and promotes recruitment of proteins that mediate epigenetic repression. Mediates recruitment of the HUSH complex to H3K9me3 sites: the HUSH complex is recruited to genomic loci rich in H3K9me3 and is required to maintain transcriptional silencing by promoting recruitment of SETDB1, a histone methyltransferase that mediates further deposition of H3K9me3, as well as MORC2. Binds H3K9me and promotes DNA methylation by recruiting DNMT3A to target CpG sites; these can be situated within the coding region of the gene. Mediates down-regulation of CDH1 expression. Also represses L1 retrotransposons in collaboration with MORC2 and, probably, SETDB1, the silencing is dependent of repressive epigenetic modifications, such as H3K9me3 mark. Silencing events often occur within introns of transcriptionally active genes, and lead to the down-regulation of host gene expression. The HUSH complex is also involved in the silencing of unintegrated retroviral DNA by being recruited by ZNF638: some part of the retroviral DNA formed immediately after infection remains unintegrated in the host genome and is transcriptionally repressed. This Homo sapiens (Human) protein is M-phase phosphoprotein 8.